The following is a 204-amino-acid chain: Holliday junction branch migration complex subunit RuvA (204 aa).

The domain I stretch occupies residues 1-64 (MISRMKGIIL…EDAQLLYGFH (64 aa)). The segment at 65–143 (HPKERAMFSE…NLNKNLFKST (79 aa)) is domain II. The segment at 144–155 (ADHMLSSVSTDL) is flexible linker. Positions 156 to 204 (SAKSAEAEAISALISLGYKPQEAAQLIKNIAQPDLDSQALIKHALRSTL) are domain III.

It belongs to the RuvA family. In terms of assembly, homotetramer. Forms an RuvA(8)-RuvB(12)-Holliday junction (HJ) complex. HJ DNA is sandwiched between 2 RuvA tetramers; dsDNA enters through RuvA and exits via RuvB. An RuvB hexamer assembles on each DNA strand where it exits the tetramer. Each RuvB hexamer is contacted by two RuvA subunits (via domain III) on 2 adjacent RuvB subunits; this complex drives branch migration. In the full resolvosome a probable DNA-RuvA(4)-RuvB(12)-RuvC(2) complex forms which resolves the HJ.

It is found in the cytoplasm. In terms of biological role, the RuvA-RuvB-RuvC complex processes Holliday junction (HJ) DNA during genetic recombination and DNA repair, while the RuvA-RuvB complex plays an important role in the rescue of blocked DNA replication forks via replication fork reversal (RFR). RuvA specifically binds to HJ cruciform DNA, conferring on it an open structure. The RuvB hexamer acts as an ATP-dependent pump, pulling dsDNA into and through the RuvAB complex. HJ branch migration allows RuvC to scan DNA until it finds its consensus sequence, where it cleaves and resolves the cruciform DNA. The sequence is that of Holliday junction branch migration complex subunit RuvA from Hamiltonella defensa subsp. Acyrthosiphon pisum (strain 5AT).